A 281-amino-acid chain; its full sequence is ATP phosphoribosyltransferase (281 aa).

This sequence belongs to the ATP phosphoribosyltransferase family. Long subfamily. Mg(2+) serves as cofactor.

Its subcellular location is the cytoplasm. It catalyses the reaction 1-(5-phospho-beta-D-ribosyl)-ATP + diphosphate = 5-phospho-alpha-D-ribose 1-diphosphate + ATP. It participates in amino-acid biosynthesis; L-histidine biosynthesis; L-histidine from 5-phospho-alpha-D-ribose 1-diphosphate: step 1/9. With respect to regulation, feedback inhibited by histidine. In terms of biological role, catalyzes the condensation of ATP and 5-phosphoribose 1-diphosphate to form N'-(5'-phosphoribosyl)-ATP (PR-ATP). Has a crucial role in the pathway because the rate of histidine biosynthesis seems to be controlled primarily by regulation of HisG enzymatic activity. This Natronomonas pharaonis (strain ATCC 35678 / DSM 2160 / CIP 103997 / JCM 8858 / NBRC 14720 / NCIMB 2260 / Gabara) (Halobacterium pharaonis) protein is ATP phosphoribosyltransferase.